The chain runs to 538 residues: MITASSAILLVALIAALWRLSLIGQRPKDYPPGPPTLPILGNLHQIPKARRHIQFEKWARQYGPVYSLILGTKVMIVLNTEDAIRELVDKRGAIYASRPESFIAQDTISGGLRILWMHNGETWKMVRKLAHRILNITTARTYVPYQDLETKRMLVDFLEKPDSFIEHMRRFSTSLTTQMTFGFRTTTIHDPRFKESFDIFDESWELVASPVAALMDFFPFLRKIPDFLLPVKREAKKLHQREITLFRDHYFETRRKLQDGTAKPCVCVDLMKLQKEESFSDNLAAYIGGSLLQAGSETTAGVLVGFIQAITIFPSVAKIAQEEIDYICGDRLPDLNDVPDLPYVRACTKETLRWMPGFLLGLPHAATRDDVYLGYRIPNKATILMNVWAVHNNPEQYPNPRTFDPRRYMDHEYYPQTAANTEVTRDHFAFGAGRRRCQGIHIAERSLFLSISRLLWAFDFKRAVDPVTKLEIFPSMDDLSDGAFTQPNTFPARIVPRSEEKARRVGEEWGKVLELLDGDMQWRTVPEGLIWRDYEAVA.

Residues 4–24 traverse the membrane as a helical segment; sequence ASSAILLVALIAALWRLSLIG. C437 is a heme binding site.

Belongs to the cytochrome P450 family. Heme is required as a cofactor.

The protein localises to the membrane. It functions in the pathway secondary metabolite biosynthesis. Its function is as follows. Cytochrome P450 monooxygenase; part of the gene cluster that mediates the biosynthesis of flavoglaucin and congeners (including aspergin, dihydroauroglaucin and auroglaucin), prenylated salicylaldehyde derivatives carrying a saturated or an unsaturated C-7 side chain. The PKS fogA releases the carboxylic acid (8E,10E,12E)-3,5,7-trihydroxytetradeca-8,10,12-trienoic acid as its product, as well as derivatives with one and two double bonds. FogA is indeed able to reduce the initial triketide, thus being at least partially responsible for the differently saturated heptyl side chains of flavoglaucin congeners. The oxidoreductases fogB, fogC and fogD modify the nascent polyketide in fogA-bound form and, together, fogA, fogB, fogC and fogD are necessary for the formation of the aromatic core and the cyclized PKS products are released as salicyl alcohols. In particular, fogB is responsible for oxidation of a hydroxyl group or reduction of remaining double bond(s) at the C-7 residue whereas fogD is probably involved in the reductive release of the modified PKS products. The cytochrome P450 monooxygenase fogE is then responsible for the hydroxylation at C-3 of the benzene ring. The fogE products are substrates of the prenyltransferase fogH and the prenylated benzyl alcohols are subsequently oxidized by the fogF to produce the final aryl aldehydes flavoglaucin and congeners. The short-chain dehydrogenase fogG does not seem to be involved in the biosynthesis of the prenylated salicylaldehyde derivatives. The polypeptide is Cytochrome P450 monooxygenase fogE (Aspergillus ruber (strain CBS 135680)).